The following is a 148-amino-acid chain: Arginine repressor (148 aa).

This sequence belongs to the ArgR family.

It is found in the cytoplasm. It participates in amino-acid biosynthesis; L-arginine biosynthesis [regulation]. Functionally, regulates arginine biosynthesis genes. The chain is Arginine repressor from Chlorobium limicola (strain DSM 245 / NBRC 103803 / 6330).